Reading from the N-terminus, the 501-residue chain is TGF-beta receptor type-1 (501 aa).

Positions 1–29 (MEAASAALRRCLLLIVLVAAATLLPGAKA) are cleaved as a signal peptide. Residues 30–124 (LQCFCHLCTK…QSAGLGPVEL (95 aa)) lie on the Extracellular side of the membrane. 5 cysteine pairs are disulfide-bonded: C32/C50, C34/C37, C44/C67, C82/C94, and C95/C100. N-linked (GlcNAc...) asparagine glycosylation occurs at N41. A helical membrane pass occupies residues 125-145 (AAVIAGPVCFVCIALMLMVYI). Residues 146 to 501 (CHNRTVIHHR…QLSQQEGIKM (356 aa)) are Cytoplasmic-facing. S163 carries the post-translational modification Phosphoserine. One can recognise a GS domain in the interval 173–202 (TTLKDLIYDMTTSGSGSGLPLLVQRTIART). T183 and T184 each carry phosphothreonine; by TGFBR2. S185, S187, and S189 each carry phosphoserine; by TGFBR2. The FKBP1A-binding motif lies at 191–192 (LP). Positions 203–493 (IVLQESIGKG…LRIKKTLSQL (291 aa)) constitute a Protein kinase domain. ATP-binding positions include 209 to 217 (IGKGRFGEV) and K230. Residue D331 is the Proton acceptor of the active site. K389 is covalently cross-linked (Glycyl lysine isopeptide (Lys-Gly) (interchain with G-Cter in SUMO)).

The protein belongs to the protein kinase superfamily. TKL Ser/Thr protein kinase family. TGFB receptor subfamily. In terms of assembly, homodimer; in the endoplasmic reticulum but also at the cell membrane. Heterohexamer; TGFB1, TGFB2 and TGFB3 homodimeric ligands assemble a functional receptor composed of two TGFBR1 and TGFBR2 heterodimers to form a ligand-receptor heterohexamer. The respective affinity of TGBRB1 and TGFBR2 for the ligands may modulate the kinetics of assembly of the receptor and may explain the different biological activities of TGFB1, TGFB2 and TGFB3. Component of a complex composed of TSC22D1 (via N-terminus), TGFBR1 and TGFBR2; the interaction between TSC22D1 and TGFBR1 is inhibited by SMAD7 and promoted by TGFB1. Interacts with CD109; inhibits TGF-beta receptor activation in keratinocytes. Interacts with RBPMS. Interacts with SMAD2, SMAD3 and ZFYVE9; ZFYVE9 recruits SMAD2 and SMAD3 to the TGF-beta receptor. Interacts with TRAF6 and MAP3K7; induces MAP3K7 activation by TRAF6. Interacts with PARD6A; involved in TGF-beta induced epithelial to mesenchymal transition. Interacts with NEDD4L. Interacts with SMAD7, SMURF1 and SMURF2; SMAD7 recruits NEDD4L, SMURF1 and SMURF2 to the TGF-beta receptor. Interacts with USP15 and VPS39. Interacts (unphosphorylated) with FKBP1A; prevents TGFBR1 phosphorylation by TGFBR2 and stabilizes it in the inactive conformation. Interacts with SDCBP (via C-terminus). Interacts with CAV1 and this interaction is impaired in the presence of SDCBP. Interacts with APPL1; interaction is TGF beta dependent; mediates trafficking of the TGFBR1 from the endosomes to the nucleus via microtubules in a TRAF6-dependent manner. Interacts with GPR50; this interaction promotes the constitutive activation of SMAD signaling pathway. It depends on Mg(2+) as a cofactor. Mn(2+) is required as a cofactor. Post-translationally, phosphorylated at basal levels in the absence of ligand. Activated upon phosphorylation by TGFBR2, mainly in the GS domain. Phosphorylation in the GS domain abrogates FKBP1A-binding. In terms of processing, N-Glycosylated. Ubiquitinated; undergoes ubiquitination catalyzed by several E3 ubiquitin ligases including SMURF1, SMURF2 and NEDD4L2. Results in the proteasomal and/or lysosomal degradation of the receptor thereby negatively regulating its activity. Deubiquitinated by USP15, leading to stabilization of the protein and enhanced TGF-beta signal. Its ubiquitination and proteasome-mediated degradation is negatively regulated by SDCBP. As to expression, urogenital ridge, testis, ovary, brain and lungs.

The protein resides in the cell membrane. The protein localises to the cell junction. It is found in the tight junction. Its subcellular location is the membrane raft. It localises to the cell surface. It carries out the reaction L-threonyl-[receptor-protein] + ATP = O-phospho-L-threonyl-[receptor-protein] + ADP + H(+). It catalyses the reaction L-seryl-[receptor-protein] + ATP = O-phospho-L-seryl-[receptor-protein] + ADP + H(+). Kept in an inactive conformation by FKBP1A preventing receptor activation in absence of ligand. CD109 is another inhibitor of the receptor. Functionally, transmembrane serine/threonine kinase forming with the TGF-beta type II serine/threonine kinase receptor, TGFBR2, the non-promiscuous receptor for the TGF-beta cytokines TGFB1, TGFB2 and TGFB3. Transduces the TGFB1, TGFB2 and TGFB3 signal from the cell surface to the cytoplasm and is thus regulating a plethora of physiological and pathological processes including cell cycle arrest in epithelial and hematopoietic cells, control of mesenchymal cell proliferation and differentiation, wound healing, extracellular matrix production, immunosuppression and carcinogenesis. The formation of the receptor complex composed of 2 TGFBR1 and 2 TGFBR2 molecules symmetrically bound to the cytokine dimer results in the phosphorylation and the activation of TGFBR1 by the constitutively active TGFBR2. Activated TGFBR1 phosphorylates SMAD2 which dissociates from the receptor and interacts with SMAD4. The SMAD2-SMAD4 complex is subsequently translocated to the nucleus where it modulates the transcription of the TGF-beta-regulated genes. This constitutes the canonical SMAD-dependent TGF-beta signaling cascade. Also involved in non-canonical, SMAD-independent TGF-beta signaling pathways. For instance, TGFBR1 induces TRAF6 autoubiquitination which in turn results in MAP3K7 ubiquitination and activation to trigger apoptosis. Also regulates epithelial to mesenchymal transition through a SMAD-independent signaling pathway through PARD6A phosphorylation and activation. The protein is TGF-beta receptor type-1 (Tgfbr1) of Rattus norvegicus (Rat).